The sequence spans 558 residues: Protein SET DOMAIN GROUP 41 (558 aa).

Residues 115–249 (PSISVAIHHA…SGEEITVSYI (135 aa)) form the SET domain.

It belongs to the class V-like SAM-binding methyltransferase superfamily.

This chain is Protein SET DOMAIN GROUP 41 (SDG41), found in Arabidopsis thaliana (Mouse-ear cress).